The sequence spans 597 residues: U3 small nucleolar RNA-associated protein 6 homolog (597 aa).

HAT repeat units follow at residues 121–153 (ATKT…WEME), 156–188 (LSSE…MELM), 304–335 (RKEE…FCLE), 488–520 (GGYK…FEKE), and 524–557 (CNMA…EELN).

The protein belongs to the UTP6 family. Part of the small subunit (SSU) processome, composed of more than 70 proteins and the RNA chaperone small nucleolar RNA (snoRNA) U3.

The protein localises to the nucleus. The protein resides in the nucleolus. Functionally, part of the small subunit (SSU) processome, first precursor of the small eukaryotic ribosomal subunit. During the assembly of the SSU processome in the nucleolus, many ribosome biogenesis factors, an RNA chaperone and ribosomal proteins associate with the nascent pre-rRNA and work in concert to generate RNA folding, modifications, rearrangements and cleavage as well as targeted degradation of pre-ribosomal RNA by the RNA exosome. Involved in nucleolar processing of pre-18S ribosomal RNA. This chain is U3 small nucleolar RNA-associated protein 6 homolog, found in Homo sapiens (Human).